Here is a 1051-residue protein sequence, read N- to C-terminus: Kinesin-like protein KIN-UC (1051 aa).

3 stretches are compositionally biased toward low complexity: residues 1–12, 28–39, and 64–90; these read MSSSNSSSAVRS, NSNHAVSLSSSS, and SASS…PVRR. Disordered regions lie at residues 1–39 and 51–109; these read MSSS…SSSS and PGIA…RVSV. A Kinesin motor domain is found at 104 to 441; the sequence is RVRVSVRVRP…IMFGQRAMKI (338 aa). 189-196 serves as a coordination point for ATP; sequence GQTGTGKT. The short motif at 411 to 419 is the D-BOX element; sequence RTSLIITIG. Coiled-coil stretches lie at residues 452–534 and 568–761; these read DYES…QKDQ and DTSQ…KRYM. The span at 753 to 766 shows a compositional bias: basic and acidic residues; that stretch reads NVVEEKRYMKEDLS. A disordered region spans residues 753–788; sequence NVVEEKRYMKEDLSKGSAESGAQTGSQRSQGLKKSL. Positions 772-788 are enriched in polar residues; the sequence is SGAQTGSQRSQGLKKSL. ARM repeat units follow at residues 792 to 831, 833 to 873, and 875 to 915; these read RATM…NLAA, EANQ…NLAM, and EKSQ…NLCG. Residues 917–956 form an ARM 4; degenerate repeat; it reads EKFLKLLKEEEGIKGLLTMAQSGNIDIIAQVARGMANFAK.

This sequence belongs to the TRAFAC class myosin-kinesin ATPase superfamily. Kinesin family. Ungrouped subfamily. As to quaternary structure, interacts (via C-terminus) with NEK5. As to expression, expressed in young root hair-forming cells and in root hair-producing cells at the boundary between the hypocotyl and root. Expressed in cotyledons, young leaves, trichomes and flowers.

The protein resides in the cytoplasm. It localises to the cytoskeleton. The protein localises to the spindle. Its subcellular location is the phragmoplast. Its function is as follows. Acts as a plus-end microtubule-dependent motor protein. Involved in the control of root hair tip growth by promoting microtubule depolymerization and limiting the accumulation of endoplasmic microtubules. In vitro, binds to polymerized actin through ARM repeats, and to polymerized tubulin through N-terminal motor domain. This is Kinesin-like protein KIN-UC from Arabidopsis thaliana (Mouse-ear cress).